The following is a 60-amino-acid chain: Small, acid-soluble spore protein H 1 (60 aa).

Positions 39 to 60 are disordered; sequence IHPLDNPNQKQSVPVASLEEHS.

Belongs to the SspH family.

It localises to the spore core. The polypeptide is Small, acid-soluble spore protein H 1 (Geobacillus kaustophilus (strain HTA426)).